Consider the following 388-residue polypeptide: Deoxyguanosinetriphosphate triphosphohydrolase-like protein (388 aa).

The tract at residues 24 to 44 (HSAQTRGRVHAEPPSTSRTEF) is disordered. One can recognise an HD domain in the interval 78–209 (RLTHSLEVAQ…ANLADEVAYN (132 aa)).

The protein belongs to the dGTPase family. Type 2 subfamily.

In Ralstonia pickettii (strain 12J), this protein is Deoxyguanosinetriphosphate triphosphohydrolase-like protein.